Consider the following 264-residue polypeptide: Hemin import ATP-binding protein HmuV (264 aa).

The region spanning 2–241 (IEVSGVSVRL…ETMLSVFGLR (240 aa)) is the ABC transporter domain. 34-41 (GPNGSGKT) contacts ATP.

The protein belongs to the ABC transporter superfamily. Heme (hemin) importer (TC 3.A.1.14.5) family. In terms of assembly, the complex is composed of two ATP-binding proteins (HmuV), two transmembrane proteins (HmuU) and a solute-binding protein (HmuT).

It localises to the cell inner membrane. In terms of biological role, part of the ABC transporter complex HmuTUV involved in hemin import. Responsible for energy coupling to the transport system. The polypeptide is Hemin import ATP-binding protein HmuV (Rhizobium leguminosarum).